The chain runs to 176 residues: Ribosome maturation factor RimM (176 aa).

One can recognise a PRC barrel domain in the interval 97 to 176 (EDEFYWRDLI…QIIVDWDPDF (80 aa)).

It belongs to the RimM family. Binds ribosomal protein uS19.

It localises to the cytoplasm. An accessory protein needed during the final step in the assembly of 30S ribosomal subunit, possibly for assembly of the head region. Essential for efficient processing of 16S rRNA. May be needed both before and after RbfA during the maturation of 16S rRNA. It has affinity for free ribosomal 30S subunits but not for 70S ribosomes. This is Ribosome maturation factor RimM from Shewanella amazonensis (strain ATCC BAA-1098 / SB2B).